A 344-amino-acid chain; its full sequence is Fructose-1,6-bisphosphatase class 1 (344 aa).

E92, D115, L117, and D118 together coordinate Mg(2+). Residues 118–121, N211, Y244, and K274 each bind substrate; that span reads DGSS. Position 280 (E280) interacts with Mg(2+).

Belongs to the FBPase class 1 family. In terms of assembly, homotetramer. Requires Mg(2+) as cofactor.

It localises to the cytoplasm. The catalysed reaction is beta-D-fructose 1,6-bisphosphate + H2O = beta-D-fructose 6-phosphate + phosphate. Its pathway is carbohydrate biosynthesis; gluconeogenesis. This is Fructose-1,6-bisphosphatase class 1 from Aeromonas hydrophila subsp. hydrophila (strain ATCC 7966 / DSM 30187 / BCRC 13018 / CCUG 14551 / JCM 1027 / KCTC 2358 / NCIMB 9240 / NCTC 8049).